The chain runs to 1045 residues: Endoglucanase B (1045 aa).

The signal sequence occupies residues 1 to 33; sequence MLRQVPRTLVAGGSALAVAVGVLVAPLATGAAA. The segment at 34 to 492 is catalytic; sequence APTYNYAEAL…LASFPTPEQP (459 aa). D91 acts as the Nucleophile in catalysis. Active-site residues include H410, D449, and E458. The CBM3 domain maps to 493–642; that stretch reads DGDQLFVEAM…STLVWGKEPT (150 aa). 4 linker ('hinge') (Pro-Thr box) regions span residues 644-650, 734-748, 831-846, and 931-944; these read TTTDTTP, AAVTFTTDTTGETEP, APVTFTTAAPPVDTVA, and SPVTFTTLPVTSTP. Fibronectin type-III domains follow at residues 653 to 743, 751 to 840, and 849 to 940; these read TPGT…TDTT, TPGT…TAAP, and VPGT…TLPV. A CBM2 domain is found at 939 to 1045; that stretch reads PVTSTPSCTV…SFTVNGEVCG (107 aa). A disulfide bond links C946 and C1044.

Belongs to the glycosyl hydrolase 9 (cellulase E) family.

It catalyses the reaction Endohydrolysis of (1-&gt;4)-beta-D-glucosidic linkages in cellulose, lichenin and cereal beta-D-glucans.. The biological conversion of cellulose to glucose generally requires three types of hydrolytic enzymes: (1) Endoglucanases which cut internal beta-1,4-glucosidic bonds; (2) Exocellobiohydrolases that cut the disaccharide cellobiose from the non-reducing end of the cellulose polymer chain; (3) Beta-1,4-glucosidases which hydrolyze the cellobiose and other short cello-oligosaccharides to glucose. In Cellulomonas fimi, this protein is Endoglucanase B (cenB).